Reading from the N-terminus, the 72-residue chain is Toxin Acra II-1 (72 aa).

In terms of domain architecture, LCN-type CS-alpha/beta spans 3-67 (VPGNYPLNTY…VWNAAKNYCK (65 aa)). Cystine bridges form between cysteine 18-cysteine 41, cysteine 27-cysteine 46, and cysteine 31-cysteine 48.

The protein belongs to the long (3 C-C) scorpion toxin superfamily. Sodium channel inhibitor family. Beta subfamily. As to expression, expressed by the venom gland.

It localises to the secreted. In terms of biological role, binds to sodium channels (Nav) and affects the channel activation process. This Androctonus crassicauda (Arabian fat-tailed scorpion) protein is Toxin Acra II-1.